We begin with the raw amino-acid sequence, 83 residues long: Cell division topological specificity factor (83 aa).

This sequence belongs to the MinE family.

Its function is as follows. Prevents the cell division inhibition by proteins MinC and MinD at internal division sites while permitting inhibition at polar sites. This ensures cell division at the proper site by restricting the formation of a division septum at the midpoint of the long axis of the cell. In Deinococcus deserti (strain DSM 17065 / CIP 109153 / LMG 22923 / VCD115), this protein is Cell division topological specificity factor.